We begin with the raw amino-acid sequence, 298 residues long: MKQIAFIGLGHMGAPMATNLLKAGYLLNVFDLVQSAVDGLVAAGASAARSARDAVQGADVVISMLPASQHVEGLYLDDDGLLAHIAPGTLVLECSTIAPTSARKIHAAARERGLAMLDAPVSGGTAGAAAGTLTFMVGGDAEALEKARPLFEAMGRNIFHAGPDGAGQVAKVCNNQLLAVLMIGTAEAMALGVANGLEAKVLAEIMRRSSGGNWALEVYNPWPGVMENAPASRDYSGGFMAQLMAKDLGLAQEAAQASASSTPMGSLALSLYRLLLKQGYAERDFSVVQKLFDPTQGQ.

Residues 2 to 31 (KQIAFIGLGHMGAPMATNLLKAGYLLNVFD), 65 to 66 (LP), proline 66, and threonine 96 each bind NAD(+). The active site involves lysine 171. Lysine 246 lines the NAD(+) pocket.

Belongs to the HIBADH-related family. As to quaternary structure, homotetramer, dimer of dimers.

It catalyses the reaction L-serine + NAD(+) = aminoacetaldehyde + CO2 + NADH. It functions in the pathway amino-acid degradation. NAD-dependent L-serine dehydrogenase that catalyzes the oxidation of L-serine and methyl-L-serine and is possibly involved in serine catabolism. Has low activity toward beta-hydroxyisobutyrate. This Pseudomonas aeruginosa (strain ATCC 15692 / DSM 22644 / CIP 104116 / JCM 14847 / LMG 12228 / 1C / PRS 101 / PAO1) protein is NAD-dependent L-serine dehydrogenase.